The following is a 165-amino-acid chain: Crossover junction endodeoxyribonuclease RuvC (165 aa).

Catalysis depends on residues Asp-7, Glu-67, and Asp-140. Residues Asp-7, Glu-67, and Asp-140 each coordinate Mg(2+).

It belongs to the RuvC family. In terms of assembly, homodimer which binds Holliday junction (HJ) DNA. The HJ becomes 2-fold symmetrical on binding to RuvC with unstacked arms; it has a different conformation from HJ DNA in complex with RuvA. In the full resolvosome a probable DNA-RuvA(4)-RuvB(12)-RuvC(2) complex forms which resolves the HJ. Requires Mg(2+) as cofactor.

The protein resides in the cytoplasm. The enzyme catalyses Endonucleolytic cleavage at a junction such as a reciprocal single-stranded crossover between two homologous DNA duplexes (Holliday junction).. Its function is as follows. The RuvA-RuvB-RuvC complex processes Holliday junction (HJ) DNA during genetic recombination and DNA repair. Endonuclease that resolves HJ intermediates. Cleaves cruciform DNA by making single-stranded nicks across the HJ at symmetrical positions within the homologous arms, yielding a 5'-phosphate and a 3'-hydroxyl group; requires a central core of homology in the junction. The consensus cleavage sequence is 5'-(A/T)TT(C/G)-3'. Cleavage occurs on the 3'-side of the TT dinucleotide at the point of strand exchange. HJ branch migration catalyzed by RuvA-RuvB allows RuvC to scan DNA until it finds its consensus sequence, where it cleaves and resolves the cruciform DNA. In Desulfitobacterium hafniense (strain DSM 10664 / DCB-2), this protein is Crossover junction endodeoxyribonuclease RuvC.